An 880-amino-acid polypeptide reads, in one-letter code: Alanine--tRNA ligase (880 aa).

Positions 568, 572, 670, and 674 each coordinate Zn(2+).

Belongs to the class-II aminoacyl-tRNA synthetase family. Zn(2+) is required as a cofactor.

The protein localises to the cytoplasm. It carries out the reaction tRNA(Ala) + L-alanine + ATP = L-alanyl-tRNA(Ala) + AMP + diphosphate. Its function is as follows. Catalyzes the attachment of alanine to tRNA(Ala) in a two-step reaction: alanine is first activated by ATP to form Ala-AMP and then transferred to the acceptor end of tRNA(Ala). Also edits incorrectly charged Ser-tRNA(Ala) and Gly-tRNA(Ala) via its editing domain. The protein is Alanine--tRNA ligase of Exiguobacterium sibiricum (strain DSM 17290 / CCUG 55495 / CIP 109462 / JCM 13490 / 255-15).